Reading from the N-terminus, the 115-residue chain is Nucleoid-associated protein alr5067 (115 aa).

The protein belongs to the YbaB/EbfC family. In terms of assembly, homodimer.

It localises to the cytoplasm. The protein localises to the nucleoid. In terms of biological role, binds to DNA and alters its conformation. May be involved in regulation of gene expression, nucleoid organization and DNA protection. The polypeptide is Nucleoid-associated protein alr5067 (Nostoc sp. (strain PCC 7120 / SAG 25.82 / UTEX 2576)).